The following is a 447-amino-acid chain: Phosphoglucosamine mutase (447 aa).

Catalysis depends on serine 103, which acts as the Phosphoserine intermediate. 4 residues coordinate Mg(2+): serine 103, aspartate 242, aspartate 244, and aspartate 246. A Phosphoserine modification is found at serine 103.

It belongs to the phosphohexose mutase family. Requires Mg(2+) as cofactor. In terms of processing, activated by phosphorylation.

The catalysed reaction is alpha-D-glucosamine 1-phosphate = D-glucosamine 6-phosphate. Its function is as follows. Catalyzes the conversion of glucosamine-6-phosphate to glucosamine-1-phosphate. The chain is Phosphoglucosamine mutase from Jannaschia sp. (strain CCS1).